Reading from the N-terminus, the 337-residue chain is Peroxisome biogenesis factor 10 (337 aa).

Topologically, residues 1–24 (MKNDNKLQKEALMRLSQLRFPFAD) are peroxisomal matrix. A helical membrane pass occupies residues 25-54 (APSIVQAHQKDEQIQGLLIMKVTELCKLIK). Position 55 (S55) is a topological domain, cytoplasmic. Residues 56 to 77 (QLFVNSYPKELSIFAKLLYLLF) traverse the membrane as a helical segment. At 78–105 (TTGRRGRTLGEEYVDLTYTNRKGTRLAG) the chain is on the peroxisomal matrix side. Residues 106-138 (RLKMIVFAFAYPLCPYFITKLYKKIMKNNKESK) traverse the membrane as a helical segment. The Cytoplasmic segment spans residues 139 to 145 (IEDTESV). A helical transmembrane segment spans residues 146 to 166 (AAFCKGLLDFILDVHMTLFYF). Residues 167-202 (KGAFYSISKRIFGMRYVFKHILSKNEANFREEGSQK) are Peroxisomal matrix-facing. Residues 203-222 (YKVLGYILLAQNVMKWYPVL) form a helical membrane-spanning segment. Residues 223–337 (TSTLGSWIYG…QPQEILVLRQ (115 aa)) lie on the Cytoplasmic side of the membrane. The Zn(2+) site is built by C286, C289, C301, H303, C306, C309, C320, and C323. An RING-type zinc finger spans residues 286–327 (CILCLMNMSDPSCAPCGHLFCWSCLMSWCKERPECPLCRQHC).

The protein belongs to the pex2/pex10/pex12 family. In terms of assembly, component of the PEX2-PEX10-PEX12 retrotranslocation channel, composed of PEX2, PEX10 and PEX12.

The protein localises to the peroxisome membrane. It carries out the reaction S-ubiquitinyl-[E2 ubiquitin-conjugating enzyme]-L-cysteine + [acceptor protein]-L-lysine = [E2 ubiquitin-conjugating enzyme]-L-cysteine + N(6)-ubiquitinyl-[acceptor protein]-L-lysine.. The protein operates within protein modification; protein ubiquitination. The E3 ubiquitin-protein ligase activity is stimulated by PEX12. E3 ubiquitin-protein ligase component of a retrotranslocation channel required for peroxisome organization by mediating export of the PEX5 receptor from peroxisomes to the cytosol, thereby promoting PEX5 recycling. The retrotranslocation channel is composed of PEX2, PEX10 and PEX12; each subunit contributing transmembrane segments that coassemble into an open channel that specifically allows the passage of PEX5 through the peroxisomal membrane. PEX10 also regulates PEX5 recycling by acting as a E3 ubiquitin-protein ligase. When PEX5 recycling is compromised, PEX10 catalyzes polyubiquitination of PEX5 during its passage through the retrotranslocation channel, leading to its degradation. The sequence is that of Peroxisome biogenesis factor 10 from Saccharomyces cerevisiae (strain ATCC 204508 / S288c) (Baker's yeast).